The primary structure comprises 1412 residues: DNA-directed RNA polymerase subunit beta'' (1412 aa).

The Zn(2+) site is built by Cys220, Cys294, Cys301, and Cys304.

Belongs to the RNA polymerase beta' chain family. RpoC2 subfamily. In plastids the minimal PEP RNA polymerase catalytic core is composed of four subunits: alpha, beta, beta', and beta''. When a (nuclear-encoded) sigma factor is associated with the core the holoenzyme is formed, which can initiate transcription. The cofactor is Zn(2+).

It localises to the plastid. The protein resides in the chloroplast. The catalysed reaction is RNA(n) + a ribonucleoside 5'-triphosphate = RNA(n+1) + diphosphate. Functionally, DNA-dependent RNA polymerase catalyzes the transcription of DNA into RNA using the four ribonucleoside triphosphates as substrates. This chain is DNA-directed RNA polymerase subunit beta'', found in Chara vulgaris (Common stonewort).